The sequence spans 415 residues: F-box/kelch-repeat protein At2g29600 (415 aa).

The disordered stretch occupies residues 1 to 58 (MASISETSDDGSNGGDPNQKPEEPHKNPQEGKEEENQNEKPKEDDHQEEEVENVPQIP). The span at 19–45 (QKPEEPHKNPQEGKEEENQNEKPKEDD) shows a compositional bias: basic and acidic residues. One can recognise an F-box domain in the interval 56–103 (QIPPQMPLELIVSTIATLRRCHYPTLSLLSDSFRQVISSVDLFQTRSL). Kelch repeat units follow at residues 161-208 (KIYV…VIDG), 210-254 (IYVV…FNVH), 260-309 (KIYI…AVVP), and 311-355 (HLHV…KLMI).

The sequence is that of F-box/kelch-repeat protein At2g29600 from Arabidopsis thaliana (Mouse-ear cress).